A 98-amino-acid chain; its full sequence is NADH-ubiquinone oxidoreductase chain 4L (98 aa).

Transmembrane regions (helical) follow at residues 1 to 21, 28 to 48, and 59 to 79; these read MMPI…GTLI, STLL…AMLI, and APLI…ALLV.

It belongs to the complex I subunit 4L family. In terms of assembly, core subunit of respiratory chain NADH dehydrogenase (Complex I) which is composed of 45 different subunits.

The protein localises to the mitochondrion inner membrane. The enzyme catalyses a ubiquinone + NADH + 5 H(+)(in) = a ubiquinol + NAD(+) + 4 H(+)(out). Functionally, core subunit of the mitochondrial membrane respiratory chain NADH dehydrogenase (Complex I) which catalyzes electron transfer from NADH through the respiratory chain, using ubiquinone as an electron acceptor. Part of the enzyme membrane arm which is embedded in the lipid bilayer and involved in proton translocation. This chain is NADH-ubiquinone oxidoreductase chain 4L (MT-ND4L), found in Petaurus breviceps (Australian sugar glider).